The sequence spans 570 residues: Sulfite reductase [NADPH] hemoprotein beta-component (570 aa).

C434, C440, C479, and C483 together coordinate [4Fe-4S] cluster. C483 lines the siroheme pocket.

The protein belongs to the nitrite and sulfite reductase 4Fe-4S domain family. Alpha(8)-beta(8). The alpha component is a flavoprotein, the beta component is a hemoprotein. It depends on siroheme as a cofactor. [4Fe-4S] cluster is required as a cofactor.

The enzyme catalyses hydrogen sulfide + 3 NADP(+) + 3 H2O = sulfite + 3 NADPH + 4 H(+). Its pathway is sulfur metabolism; hydrogen sulfide biosynthesis; hydrogen sulfide from sulfite (NADPH route): step 1/1. In terms of biological role, component of the sulfite reductase complex that catalyzes the 6-electron reduction of sulfite to sulfide. This is one of several activities required for the biosynthesis of L-cysteine from sulfate. This chain is Sulfite reductase [NADPH] hemoprotein beta-component (cysI), found in Salmonella typhimurium (strain LT2 / SGSC1412 / ATCC 700720).